A 218-amino-acid chain; its full sequence is Testis expressed protein 56 (218 aa).

This Rattus norvegicus (Rat) protein is Testis expressed protein 56 (Tex56).